We begin with the raw amino-acid sequence, 856 residues long: Protein translocase subunit SecA (856 aa).

ATP contacts are provided by residues glutamine 77, 95-99, and aspartate 534; that span reads GEGKT.

The protein belongs to the SecA family. As to quaternary structure, monomer and homodimer. Part of the essential Sec protein translocation apparatus which comprises SecA, SecYEG and auxiliary proteins SecDF. Other proteins may also be involved.

It is found in the cell inner membrane. It localises to the cytoplasm. The catalysed reaction is ATP + H2O + cellular proteinSide 1 = ADP + phosphate + cellular proteinSide 2.. Part of the Sec protein translocase complex. Interacts with the SecYEG preprotein conducting channel. Has a central role in coupling the hydrolysis of ATP to the transfer of proteins into and across the cell membrane, serving as an ATP-driven molecular motor driving the stepwise translocation of polypeptide chains across the membrane. The chain is Protein translocase subunit SecA from Thermosipho africanus (strain TCF52B).